The primary structure comprises 439 residues: MTGSTAAARELKAGGSLKGAVRVPGDKSISHRALLFGAIADGVTTIEGLLPAEDPISTAACLRAMGAEISPIGEGDLIRVTGVGLDGLQEPDTVLDCGNSGTTMRLMLGLLAGRDGRHFVLTGDASLRRRPMQRVGQPLAMLGAEVRGRGDGNYAPLAVQGRRLRGAVVGTPVASAQVKSALLLAALTADGPTTVIEPAPSRDHSERMLKAFGADLTVGGEMGRHISVKPGARLQGQHVVVPGDISSAAFWLVAGALVPGADLTVENVGLNPTRTGVLDVLEQMGAKIEVLNRRDVAGEPVGDLHVTSGPLQPFRFGEEIMPRLVDEVPILTVAACFCEGESHISGAAELRVKETDRLAVMARQLKTMGADLDETPDGLVIRGGRPLRGAALDSETDHRVAMSLAVASLLASGDSTLERSDAAAVSYPSFWDDLARLRI.

Positions 27, 28, and 32 each coordinate 3-phosphoshikimate. Residue lysine 27 participates in phosphoenolpyruvate binding. Residues glycine 101 and arginine 130 each coordinate phosphoenolpyruvate. 3-phosphoshikimate-binding residues include serine 175, glutamine 177, aspartate 326, and lysine 353. Residue glutamine 177 participates in phosphoenolpyruvate binding. Residue aspartate 326 is the Proton acceptor of the active site. Positions 357 and 399 each coordinate phosphoenolpyruvate.

It belongs to the EPSP synthase family. In terms of assembly, monomer.

The protein localises to the cytoplasm. The enzyme catalyses 3-phosphoshikimate + phosphoenolpyruvate = 5-O-(1-carboxyvinyl)-3-phosphoshikimate + phosphate. The protein operates within metabolic intermediate biosynthesis; chorismate biosynthesis; chorismate from D-erythrose 4-phosphate and phosphoenolpyruvate: step 6/7. Catalyzes the transfer of the enolpyruvyl moiety of phosphoenolpyruvate (PEP) to the 5-hydroxyl of shikimate-3-phosphate (S3P) to produce enolpyruvyl shikimate-3-phosphate and inorganic phosphate. This chain is 3-phosphoshikimate 1-carboxyvinyltransferase, found in Synechococcus sp. (strain WH7803).